A 770-amino-acid chain; its full sequence is Protein PAT1 homolog 1 (770 aa).

Residues 1–42 (MFRYESLEDCPLDEDEDAFQGLGEEDEEIDQFNDDTFGSGAV) are disordered. The tract at residues 1–84 (MFRYESLEDC…EMDLLGDHEE (84 aa)) is region A; interaction with DDX6/RCK. The segment at 1-397 (MFRYESLEDC…HRVSHQDHLR (397 aa)) is involved in nuclear foci localization. A compositionally biased stretch (acidic residues) spans 7 to 33 (LEDCPLDEDEDAFQGLGEEDEEIDQFN). The region N; interaction with decapping machinery stretch occupies residues 85-388 (NLAERLSKMV…LNGTGDRGGH (304 aa)). Positions 86–95 (LAERLSKMVI) match the Nuclear export signal motif. Ser-177 is modified (phosphoserine). The residue at position 178 (Thr-178) is a Phosphothreonine. A phosphoserine mark is found at Ser-179 and Ser-184. Thr-194 is subject to Phosphothreonine. An asymmetric dimethylarginine mark is found at Arg-217, Arg-223, and Arg-263. Residues 223–397 (RYPAPYGERM…HRVSHQDHLR (175 aa)) form an involved in RNA-binding region. Ser-278 is subject to Phosphoserine. Arg-284 is subject to Asymmetric dimethylarginine. 2 disordered regions span residues 320–341 (SAPP…PHLQ) and 369–394 (QLQS…SHQD). The segment covering 321 to 337 (APPPATPPPQQHPPGPG) has biased composition (pro residues). Low complexity predominate over residues 369–380 (QLQSRNQHRNLN). Position 385 is an omega-N-methylarginine (Arg-385). Basic and acidic residues predominate over residues 385-394 (RGGHRVSHQD). Residues 389–448 (RVSHQDHLRKDPYANLMLQREKDWVSKIQMMQLQSTDPYLDDFYYQNYFEKLEKSSAAEE) are region H. The involved in nuclear speckle localization stretch occupies residues 398 to 770 (KDPYANLMLQ…TKLQLVQGMR (373 aa)). The interval 449–770 (MQGDGPKKER…TKLQLVQGMR (322 aa)) is region C.

This sequence belongs to the PAT1 family. As to quaternary structure, interacts (via region A) with DDX6/RCK. Interacts (via region H and region C) with LSM1 and LSM4. Interacts (via region N) with DCP1A, DCP2, EDC3, EDC4 and XRN1. Interacts with the CCR4-NOT complex. Interacts with the Lsm-containing SMN-Sm protein complex. Interacts with EIF4ENIF1/4E-T.

It is found in the cytoplasm. The protein resides in the P-body. The protein localises to the nucleus. It localises to the PML body. Its subcellular location is the nucleus speckle. Its function is as follows. RNA-binding protein involved in deadenylation-dependent decapping of mRNAs, leading to the degradation of mRNAs. Acts as a scaffold protein that connects deadenylation and decapping machinery. Required for cytoplasmic mRNA processing body (P-body) assembly. This is Protein PAT1 homolog 1 (Patl1) from Rattus norvegicus (Rat).